We begin with the raw amino-acid sequence, 304 residues long: Acetyl-coenzyme A carboxylase carboxyl transferase subunit beta (304 aa).

The CoA carboxyltransferase N-terminal domain maps to 29–298 (LWSKCESCGA…ASDVSPAAVP (270 aa)). Positions 33, 36, 52, and 55 each coordinate Zn(2+). Residues 33–55 (CESCGALTYTKDLRANQMVCLEC) form a C4-type zinc finger.

It belongs to the AccD/PCCB family. In terms of assembly, acetyl-CoA carboxylase is a heterohexamer composed of biotin carboxyl carrier protein (AccB), biotin carboxylase (AccC) and two subunits each of ACCase subunit alpha (AccA) and ACCase subunit beta (AccD). It depends on Zn(2+) as a cofactor.

Its subcellular location is the cytoplasm. The catalysed reaction is N(6)-carboxybiotinyl-L-lysyl-[protein] + acetyl-CoA = N(6)-biotinyl-L-lysyl-[protein] + malonyl-CoA. It participates in lipid metabolism; malonyl-CoA biosynthesis; malonyl-CoA from acetyl-CoA: step 1/1. Functionally, component of the acetyl coenzyme A carboxylase (ACC) complex. Biotin carboxylase (BC) catalyzes the carboxylation of biotin on its carrier protein (BCCP) and then the CO(2) group is transferred by the transcarboxylase to acetyl-CoA to form malonyl-CoA. This chain is Acetyl-coenzyme A carboxylase carboxyl transferase subunit beta, found in Acaryochloris marina (strain MBIC 11017).